The sequence spans 414 residues: Poly(3-hydroxyalkanoate) depolymerase C (414 aa).

The N-terminal stretch at 1–37 is a signal peptide; it reads MLAKQIKKANSRSTLLRKSLLFAAPIILAVSSSSVYA. Ser154 serves as the catalytic Charge relay system.

It belongs to the AB hydrolase superfamily. Lipase family.

The protein resides in the secreted. Functionally, specific for poly(hydroxyalkanoic acid) consisting of monomers of four or five carbon atoms and for P-nitrophenylbutyrate as substrates. The protein is Poly(3-hydroxyalkanoate) depolymerase C (phaZ1) of Paucimonas lemoignei (Pseudomonas lemoignei).